The chain runs to 987 residues: Ras guanine nucleotide exchange factor efc25 (987 aa).

The span at 1-10 (MRRPNLDRLR) shows a compositional bias: basic and acidic residues. Disordered regions lie at residues 1 to 50 (MRRP…STMS), 100 to 130 (FSST…PEIR), and 529 to 552 (NANT…ISRS). Residues 19-39 (TSVSKPSTPSYSTYSLSPTFS) show a composition bias toward low complexity. 3 stretches are compositionally biased toward polar residues: residues 40–50 (DKSVLSPSTMS), 102–111 (STHSLTRQPS), and 540–552 (RQTN…ISRS). Ser-552 carries the phosphoserine modification. One can recognise an N-terminal Ras-GEF domain in the interval 590 to 723 (SDNNVKGGTL…VILSEIDNLW (134 aa)). The Ras-GEF domain maps to 752 to 985 (TPEEFASQMT…FDKSLSLEPR (234 aa)).

It localises to the cytoplasm. In terms of biological role, has a role in chromosome segregation and cell morphology upstream of the ras1-scd1 pathway. Promotes the exchange of ras1-bound GDP by GTP leading to its activation. This Schizosaccharomyces pombe (strain 972 / ATCC 24843) (Fission yeast) protein is Ras guanine nucleotide exchange factor efc25 (efc25).